The primary structure comprises 237 residues: Ribose-5-phosphate isomerase A (237 aa).

Substrate is bound by residues 33–36, 90–93, and 103–106; these read TGST, DGAD, and KGGG. Catalysis depends on glutamate 112, which acts as the Proton acceptor. Residue lysine 130 coordinates substrate.

The protein belongs to the ribose 5-phosphate isomerase family. In terms of assembly, homodimer.

The enzyme catalyses aldehydo-D-ribose 5-phosphate = D-ribulose 5-phosphate. Its pathway is carbohydrate degradation; pentose phosphate pathway; D-ribose 5-phosphate from D-ribulose 5-phosphate (non-oxidative stage): step 1/1. Catalyzes the reversible conversion of ribose-5-phosphate to ribulose 5-phosphate. The sequence is that of Ribose-5-phosphate isomerase A from Trichodesmium erythraeum (strain IMS101).